Here is a 735-residue protein sequence, read N- to C-terminus: Serine/threonine-protein kinase BRSK2 (735 aa).

In terms of domain architecture, Protein kinase spans 20–271 (YRLEKTLGKG…LEHIQKHIWY (252 aa)). Residues 26–34 (LGKGQTGLV) and lysine 49 contribute to the ATP site. Aspartate 142 serves as the catalytic Proton acceptor. Threonine 175 is subject to Phosphothreonine; by LKB1. Threonine 261 is subject to Phosphothreonine; by PKA. Serine 295 carries the phosphoserine modification. The UBA domain occupies 298 to 340 (DIDPDVLDSMHSLGCFRDRNKLLQDLLSEEENQEKMIYFLLLD). Over residues 346 to 367 (PSHEDEDLPPRNEIDPPRKRVD) the composition is skewed to basic and acidic residues. Disordered stretches follow at residues 346 to 476 (PSHE…GVPW) and 492 to 516 (RFHRRKLQVPTPEEMSNLTPESSPE). 6 positions are modified to phosphoserine: serine 368, serine 383, serine 394, serine 413, serine 424, and serine 428. A compositionally biased stretch (low complexity) spans 411 to 429 (SRSISGASSGLSTSPLSSP). Over residues 432–446 (TPHPSPRGSPLPTPK) the composition is skewed to pro residues. Serine 456 carries the post-translational modification Phosphoserine. Residues threonine 460, threonine 464, and threonine 510 each carry the phosphothreonine modification. Phosphoserine occurs at positions 513, 514, and 521. Positions 604-606 (KEN) match the KEN box motif. Positions 682 to 735 (KNGQAAQAPSTPAKRSAHGPLGDSAAAGPGGDTEYPMGKDMAKMGPPAARREQP) are disordered.

The protein belongs to the protein kinase superfamily. CAMK Ser/Thr protein kinase family. SNF1 subfamily. As to quaternary structure, interacts with FZR1, a regulatory subunit of the APC ubiquitin ligase complex. Interacts with COPS5. Interacts with PAK1. Requires Mg(2+) as cofactor. Post-translationally, may be phosphorylated at Thr-261 by PKA. Phosphorylated at Thr-175 by STK11/LKB1 in complex with STE20-related adapter-alpha (STRADA) pseudo kinase and CAB39. Not phosphorylated at Thr-175 by CaMKK2. In contrast, it is phosphorylated and activated by CaMKK1. May be inactivated via dephosphorylation of Thr-175 by PP2C. Polyubiquitinated by the APC complex in conjunction with FZR1, leading to its proteasomal degradation. Targeted for proteasomal degradation by interaction with COPS5. BRSK2 levels change during the cell cycle. BRSK2 levels are low at the G1/S boundary and gradually increase as cells progress into G2 phase. BRSK2 levels decrease rapidly at the end of mitosis. Detected in pancreas islets and in brain (at protein level). Detected in brain and pancreas.

The protein resides in the cytoplasm. It localises to the cytoskeleton. The protein localises to the microtubule organizing center. Its subcellular location is the centrosome. It is found in the perinuclear region. The protein resides in the endoplasmic reticulum. It catalyses the reaction L-seryl-[protein] + ATP = O-phospho-L-seryl-[protein] + ADP + H(+). It carries out the reaction L-threonyl-[protein] + ATP = O-phospho-L-threonyl-[protein] + ADP + H(+). The enzyme catalyses L-seryl-[tau protein] + ATP = O-phospho-L-seryl-[tau protein] + ADP + H(+). The catalysed reaction is L-threonyl-[tau protein] + ATP = O-phospho-L-threonyl-[tau protein] + ADP + H(+). Its activity is regulated as follows. Activated by phosphorylation on Thr-175 by STK11/LKB1. Serine/threonine-protein kinase that plays a key role in polarization of neurons and axonogenesis, cell cycle progress and insulin secretion. Phosphorylates CDK16, CDC25C, MAPT/TAU, PAK1 and WEE1. Following phosphorylation and activation by STK11/LKB1, acts as a key regulator of polarization of cortical neurons, probably by mediating phosphorylation of microtubule-associated proteins such as MAPT/TAU at 'Thr-504' and 'Ser-554'. Also regulates neuron polarization by mediating phosphorylation of WEE1 at 'Ser-642' in post-mitotic neurons, leading to down-regulate WEE1 activity in polarized neurons. Plays a role in the regulation of the mitotic cell cycle progress and the onset of mitosis. Plays a role in the regulation of insulin secretion in response to elevated glucose levels, probably via phosphorylation of CDK16 and PAK1. While BRSK2 phosphorylated at Thr-175 can inhibit insulin secretion, BRSK2 phosphorylated at Thr-261 can promote insulin secretion. Regulates reorganization of the actin cytoskeleton. May play a role in the apoptotic response triggered by endoplasmic reticulum (ER) stress. The chain is Serine/threonine-protein kinase BRSK2 (Brsk2) from Mus musculus (Mouse).